Here is a 235-residue protein sequence, read N- to C-terminus: MKLGVNIDHVATLRNARGTSYPDPLKAAEIAIDAGADFITVHLREDRRHIRDEDVFNLKKSISTELNLEIAATEEMLEIAKKVKPYSISIVPEKREELTTEGGLDIVNMHSKLSSIIEEMHSSSIKVSLFIDPNIDQLKYLEKLGTKPDIIEIHTGDYCDNPSEKKLQLITNAAEYVNKLGIECHAGHGITYEHAKKMTRIPHISALNIGHYLISEAVFYGLHSVVKTMKMTMSN.

Asn6 lines the 3-amino-2-oxopropyl phosphate pocket. Residue Asp8–His9 coordinates 1-deoxy-D-xylulose 5-phosphate. Arg17 contributes to the 3-amino-2-oxopropyl phosphate binding site. His42 acts as the Proton acceptor in catalysis. 1-deoxy-D-xylulose 5-phosphate-binding residues include Arg44 and His49. Glu69 (proton acceptor) is an active-site residue. Thr99 is a 1-deoxy-D-xylulose 5-phosphate binding site. The active-site Proton donor is the His188. 3-amino-2-oxopropyl phosphate-binding positions include Gly189 and Gly210–His211.

The protein belongs to the PNP synthase family. In terms of assembly, homooctamer; tetramer of dimers.

The protein resides in the cytoplasm. The catalysed reaction is 3-amino-2-oxopropyl phosphate + 1-deoxy-D-xylulose 5-phosphate = pyridoxine 5'-phosphate + phosphate + 2 H2O + H(+). It participates in cofactor biosynthesis; pyridoxine 5'-phosphate biosynthesis; pyridoxine 5'-phosphate from D-erythrose 4-phosphate: step 5/5. In terms of biological role, catalyzes the complicated ring closure reaction between the two acyclic compounds 1-deoxy-D-xylulose-5-phosphate (DXP) and 3-amino-2-oxopropyl phosphate (1-amino-acetone-3-phosphate or AAP) to form pyridoxine 5'-phosphate (PNP) and inorganic phosphate. This Wolbachia sp. subsp. Drosophila simulans (strain wRi) protein is Pyridoxine 5'-phosphate synthase.